A 243-amino-acid chain; its full sequence is Small ribosomal subunit protein eS4 (243 aa).

The 63-residue stretch at 43 to 105 (IPLIYIVRDY…TGEHYRVLPN (63 aa)) folds into the S4 RNA-binding domain.

Belongs to the eukaryotic ribosomal protein eS4 family. Part of the 30S ribosomal subunit.

This is Small ribosomal subunit protein eS4 from Thermococcus kodakarensis (strain ATCC BAA-918 / JCM 12380 / KOD1) (Pyrococcus kodakaraensis (strain KOD1)).